A 415-amino-acid polypeptide reads, in one-letter code: Histidine--tRNA ligase (415 aa).

Belongs to the class-II aminoacyl-tRNA synthetase family. As to quaternary structure, homodimer.

The protein resides in the cytoplasm. It carries out the reaction tRNA(His) + L-histidine + ATP = L-histidyl-tRNA(His) + AMP + diphosphate + H(+). This Clostridium perfringens (strain ATCC 13124 / DSM 756 / JCM 1290 / NCIMB 6125 / NCTC 8237 / Type A) protein is Histidine--tRNA ligase.